The chain runs to 191 residues: Xanthine phosphoribosyltransferase (191 aa).

Positions 20 and 27 each coordinate xanthine. 5-phospho-alpha-D-ribose 1-diphosphate is bound at residue 128-132; that stretch reads ANGQA. K156 serves as a coordination point for xanthine.

It belongs to the purine/pyrimidine phosphoribosyltransferase family. Xpt subfamily. As to quaternary structure, homodimer.

Its subcellular location is the cytoplasm. The enzyme catalyses XMP + diphosphate = xanthine + 5-phospho-alpha-D-ribose 1-diphosphate. The protein operates within purine metabolism; XMP biosynthesis via salvage pathway; XMP from xanthine: step 1/1. Its function is as follows. Converts the preformed base xanthine, a product of nucleic acid breakdown, to xanthosine 5'-monophosphate (XMP), so it can be reused for RNA or DNA synthesis. The chain is Xanthine phosphoribosyltransferase from Acinetobacter baumannii (strain AB307-0294).